The chain runs to 335 residues: Fructose-1,6-bisphosphatase class 1 (335 aa).

Glutamate 89, aspartate 112, leucine 114, and aspartate 115 together coordinate Mg(2+). Residues 115–118 (DGSS), asparagine 208, tyrosine 241, and lysine 271 each bind substrate. Glutamate 277 contacts Mg(2+).

The protein belongs to the FBPase class 1 family. In terms of assembly, homotetramer. The cofactor is Mg(2+).

The protein resides in the cytoplasm. It carries out the reaction beta-D-fructose 1,6-bisphosphate + H2O = beta-D-fructose 6-phosphate + phosphate. It participates in carbohydrate biosynthesis; gluconeogenesis. This Proteus mirabilis (strain HI4320) protein is Fructose-1,6-bisphosphatase class 1.